Reading from the N-terminus, the 1179-residue chain is DNA-directed RNA polymerase subunit beta (1179 aa).

Belongs to the RNA polymerase beta chain family. As to quaternary structure, the RNAP catalytic core consists of 2 alpha, 1 beta, 1 beta' and 1 omega subunit. When a sigma factor is associated with the core the holoenzyme is formed, which can initiate transcription.

The catalysed reaction is RNA(n) + a ribonucleoside 5'-triphosphate = RNA(n+1) + diphosphate. In terms of biological role, DNA-dependent RNA polymerase catalyzes the transcription of DNA into RNA using the four ribonucleoside triphosphates as substrates. This chain is DNA-directed RNA polymerase subunit beta, found in Oceanobacillus iheyensis (strain DSM 14371 / CIP 107618 / JCM 11309 / KCTC 3954 / HTE831).